We begin with the raw amino-acid sequence, 377 residues long: Spermidine/putrescine import ATP-binding protein PotA (377 aa).

Residues 18–248 (IRLSGISKSF…PKNLFVARFI (231 aa)) form the ABC transporter domain. ATP is bound at residue 50–57 (GPSGCGKT).

It belongs to the ABC transporter superfamily. Spermidine/putrescine importer (TC 3.A.1.11.1) family. The complex is composed of two ATP-binding proteins (PotA), two transmembrane proteins (PotB and PotC) and a solute-binding protein (PotD).

Its subcellular location is the cell inner membrane. It catalyses the reaction ATP + H2O + polyamine-[polyamine-binding protein]Side 1 = ADP + phosphate + polyamineSide 2 + [polyamine-binding protein]Side 1.. Part of the ABC transporter complex PotABCD involved in spermidine/putrescine import. Responsible for energy coupling to the transport system. In Vibrio cholerae serotype O1 (strain ATCC 39315 / El Tor Inaba N16961), this protein is Spermidine/putrescine import ATP-binding protein PotA.